The primary structure comprises 198 residues: Fimbriae W protein (198 aa).

The HTH luxR-type domain maps to 127–192; that stretch reads HYCTTRHFSV…QFLKYIRVNL (66 aa).

It is found in the fimbrium. The sequence is that of Fimbriae W protein (fimW) from Salmonella typhimurium (strain LT2 / SGSC1412 / ATCC 700720).